Consider the following 282-residue polypeptide: MSSANQSIPVLVAGAMGRMGSEVVKAINSSKDFQLVGAIDNQKDKEGQDIGSLLGLGELDVFLSSDFEGSLCAASQNVPKDGSNNGAVLVDFTHPKFAYKHTRTSIAYGVHPVIGTTGITADQLDDLSKFADKASLGSAIIPNFSVGMVLLQQAAAAAARFYEFAELTEMHHNKKADAPSGTCIKTAELIEEQRSNFNRSFVEEEESIKGSRGGSRASGLRLHSVRLPGLVAHQQVMFGSNGETYELSHNTIDRSAYMPGVLLVIKKIRSFNKLVYGLEKIL.

Residues 14–19 and 115–117 each bind NAD(+); these read GAMGRM and GTT. His171 functions as the Proton donor/acceptor in the catalytic mechanism. (S)-2,3,4,5-tetrahydrodipicolinate is bound at residue His172. Catalysis depends on Lys175, which acts as the Proton donor. 181–182 provides a ligand contact to (S)-2,3,4,5-tetrahydrodipicolinate; sequence GT.

Belongs to the DapB family.

It is found in the cytoplasm. It catalyses the reaction (S)-2,3,4,5-tetrahydrodipicolinate + NAD(+) + H2O = (2S,4S)-4-hydroxy-2,3,4,5-tetrahydrodipicolinate + NADH + H(+). The catalysed reaction is (S)-2,3,4,5-tetrahydrodipicolinate + NADP(+) + H2O = (2S,4S)-4-hydroxy-2,3,4,5-tetrahydrodipicolinate + NADPH + H(+). The protein operates within amino-acid biosynthesis; L-lysine biosynthesis via DAP pathway; (S)-tetrahydrodipicolinate from L-aspartate: step 4/4. Catalyzes the conversion of 4-hydroxy-tetrahydrodipicolinate (HTPA) to tetrahydrodipicolinate. The chain is 4-hydroxy-tetrahydrodipicolinate reductase from Prochlorococcus marinus (strain NATL2A).